The following is a 216-amino-acid chain: 3-isopropylmalate dehydratase small subunit (216 aa).

It belongs to the LeuD family. LeuD type 1 subfamily. Heterodimer of LeuC and LeuD.

It catalyses the reaction (2R,3S)-3-isopropylmalate = (2S)-2-isopropylmalate. The protein operates within amino-acid biosynthesis; L-leucine biosynthesis; L-leucine from 3-methyl-2-oxobutanoate: step 2/4. In terms of biological role, catalyzes the isomerization between 2-isopropylmalate and 3-isopropylmalate, via the formation of 2-isopropylmaleate. The sequence is that of 3-isopropylmalate dehydratase small subunit from Burkholderia ambifaria (strain MC40-6).